We begin with the raw amino-acid sequence, 420 residues long: Gamma-glutamyl phosphate reductase (420 aa).

The protein belongs to the gamma-glutamyl phosphate reductase family.

It is found in the cytoplasm. It catalyses the reaction L-glutamate 5-semialdehyde + phosphate + NADP(+) = L-glutamyl 5-phosphate + NADPH + H(+). The protein operates within amino-acid biosynthesis; L-proline biosynthesis; L-glutamate 5-semialdehyde from L-glutamate: step 2/2. Its function is as follows. Catalyzes the NADPH-dependent reduction of L-glutamate 5-phosphate into L-glutamate 5-semialdehyde and phosphate. The product spontaneously undergoes cyclization to form 1-pyrroline-5-carboxylate. The sequence is that of Gamma-glutamyl phosphate reductase from Streptococcus pneumoniae serotype 2 (strain D39 / NCTC 7466).